Consider the following 576-residue polypeptide: Mitogen-activated protein kinase 15 (576 aa).

Residues 20 to 50 (RPSSSSSSNNHDQIQNPPTVSNPNDDEDLKK) form a disordered region. A compositionally biased stretch (polar residues) spans 28–42 (NNHDQIQNPPTVSNP). The 292-residue stretch at 90–381 (YQIQEVVGKG…AEEALADPYF (292 aa)) folds into the Protein kinase domain. ATP contacts are provided by residues 96-104 (VGKGSYGVV) and Lys119. The active-site Proton acceptor is the Asp216. Position 252 is a phosphothreonine (Thr252). The short motif at 252–254 (TDY) is the TXY element. At Tyr254 the chain carries Phosphotyrosine. Residue Thr257 is modified to Phosphothreonine. Residues 458 to 535 (EENQGPGGRS…GGGYSARNLM (78 aa)) form a disordered region. Residues 477 to 501 (LPRERVPASKNETVEERSNDIERRT) are compositionally biased toward basic and acidic residues. The span at 504–520 (AVASTLDSPKASQQAEG) shows a compositional bias: polar residues.

It belongs to the protein kinase superfamily. CMGC Ser/Thr protein kinase family. MAP kinase subfamily. As to quaternary structure, interacts with MKK7. Post-translationally, dually phosphorylated on Thr-252 and Tyr-254, which activates the enzyme.

It carries out the reaction L-seryl-[protein] + ATP = O-phospho-L-seryl-[protein] + ADP + H(+). The enzyme catalyses L-threonyl-[protein] + ATP = O-phospho-L-threonyl-[protein] + ADP + H(+). Activated by threonine and tyrosine phosphorylation. The chain is Mitogen-activated protein kinase 15 (MPK15) from Arabidopsis thaliana (Mouse-ear cress).